We begin with the raw amino-acid sequence, 430 residues long: Sphingosine-1-phosphate phosphatase 1 (430 aa).

Positions 34 to 103 (SSPAADEDAE…AGSQRRNSLT (70 aa)) are disordered. The residue at position 101 (Ser101) is a Phosphoserine. Thr103 carries the phosphothreonine modification. The next 4 membrane-spanning stretches (helical) occupy residues 121-141 (FCLG…PFWI), 152-172 (LVII…IIRW), 193-213 (MPST…LLTY), and 216-236 (WQYP…LVCL). The segment at 167–175 (KDIIRWPRP) is phosphatase sequence motif I. Residues 194–197 (PSTH) form a phosphatase sequence motif II region. His197 serves as the catalytic Proton donor. The interval 237-248 (SRIYMGMHSILD) is phosphatase sequence motif III. His244 (nucleophile) is an active-site residue. Helical transmembrane passes span 246 to 266 (ILDV…FYPL), 279 to 299 (YAPL…FTLD), 311 to 331 (ILGS…LGLS), 348 to 368 (VTLF…VLFV), and 409 to 429 (YGMV…FIGI).

The protein belongs to the type 2 lipid phosphate phosphatase family. As to expression, highly expressed in liver and kidney. Expressed in epidermis, in the stratum granulosum and the stratum spinosum.

It localises to the endoplasmic reticulum membrane. Its subcellular location is the cell membrane. The enzyme catalyses sphinganine 1-phosphate + H2O = sphinganine + phosphate. It carries out the reaction sphing-4-enine 1-phosphate + H2O = sphing-4-enine + phosphate. Inhibited by NaF, sodium orthovanadate, propanolol, and N-ethylmaleimide. Its function is as follows. Specifically dephosphorylates sphingosine 1-phosphate (S1P), dihydro-S1P, and phyto-S1P. Does not act on ceramide 1-phosphate, lysophosphatidic acid or phosphatidic acid. Sphingosine-1-phosphate phosphatase activity is needed for efficient recycling of sphingosine into the sphingolipid synthesis pathway. Regulates the intracellular levels of the bioactive sphingolipid metabolite S1P that regulates diverse biological processes acting both as an extracellular receptor ligand or as an intracellular second messenger. Involved in efficient ceramide synthesis from exogenous sphingoid bases. Converts S1P to sphingosine, which is readily metabolized to ceramide via ceramide synthase. In concert with sphingosine kinase 2 (SphK2), recycles sphingosine into ceramide through a phosphorylation/dephosphorylation cycle. Regulates endoplasmic-to-Golgi trafficking of ceramides, resulting in the regulation of ceramide levels in the endoplasmic reticulum, preferentially long-chain ceramide species, and influences the anterograde membrane transport of both ceramide and proteins from the endoplasmic reticulum to the Golgi apparatus. The modulation of intracellular ceramide levels in turn regulates apoptosis. Via S1P levels, modulates resting tone, intracellular Ca(2+) and myogenic vasoconstriction in resistance arteries. Also involved in unfolded protein response (UPR) and ER stress-induced autophagy via regulation of intracellular S1P levels. Involved in the regulation of epidermal homeostasis and keratinocyte differentiation. This chain is Sphingosine-1-phosphate phosphatase 1, found in Mus musculus (Mouse).